We begin with the raw amino-acid sequence, 879 residues long: Alanine--tRNA ligase (879 aa).

Residues H566, H570, C668, and H672 each contribute to the Zn(2+) site.

The protein belongs to the class-II aminoacyl-tRNA synthetase family. Zn(2+) serves as cofactor.

It is found in the cytoplasm. It catalyses the reaction tRNA(Ala) + L-alanine + ATP = L-alanyl-tRNA(Ala) + AMP + diphosphate. Functionally, catalyzes the attachment of alanine to tRNA(Ala) in a two-step reaction: alanine is first activated by ATP to form Ala-AMP and then transferred to the acceptor end of tRNA(Ala). Also edits incorrectly charged Ser-tRNA(Ala) and Gly-tRNA(Ala) via its editing domain. This chain is Alanine--tRNA ligase, found in Listeria monocytogenes serotype 4b (strain F2365).